The following is a 515-amino-acid chain: MTKRVLISVSDKAGIVEFAQELKKLGWEIISTGGTKVALDNAGVDTIAIDDVTGFPEMMDGRVKTLHPNIHGGLLARRDLDSHLEAAKDNKIELIDLVVVNLYPFKETILKPDVTYADAVENIDIGGPSMLRSAAKNHASVTVVVDPADYAVVLDELAANGETSYETRQRLAAKVFRHTAAYDALIAKYFTAQVGESKPEKLTLTYDLKQPMRYGENPQQDADFYQKALPTDYSIASAKQLNGKELSFNNIRDADAAIRIIRDFKDSPTVVALKHMNPCGIGQADDIETAWEYAYESDPVSIFGGIVVLNREVDAATAEKMHGVFLEIIIAPSYTDEALAILINKKKNLRILALPFNAQEASEVEAEYTGVVGGLLVQNQDVVKESPADWQVVTKRQPTETEATALEFAWKAIKYVKSNGIIVTNDHMTLGVGPGQTNRVASVRLAIDQAKDRLDGAVLASDAFFPFADNVEEIAKAGIKAIIQPGGSVRDQESIEAADKYGLTMVFTGVRHFRH.

The MGS-like domain occupies M1 to V145.

Belongs to the PurH family.

It catalyses the reaction (6R)-10-formyltetrahydrofolate + 5-amino-1-(5-phospho-beta-D-ribosyl)imidazole-4-carboxamide = 5-formamido-1-(5-phospho-D-ribosyl)imidazole-4-carboxamide + (6S)-5,6,7,8-tetrahydrofolate. The catalysed reaction is IMP + H2O = 5-formamido-1-(5-phospho-D-ribosyl)imidazole-4-carboxamide. Its pathway is purine metabolism; IMP biosynthesis via de novo pathway; 5-formamido-1-(5-phospho-D-ribosyl)imidazole-4-carboxamide from 5-amino-1-(5-phospho-D-ribosyl)imidazole-4-carboxamide (10-formyl THF route): step 1/1. It functions in the pathway purine metabolism; IMP biosynthesis via de novo pathway; IMP from 5-formamido-1-(5-phospho-D-ribosyl)imidazole-4-carboxamide: step 1/1. This chain is Bifunctional purine biosynthesis protein PurH, found in Streptococcus pneumoniae (strain P1031).